Reading from the N-terminus, the 265-residue chain is C-type lectin domain family 12 member A (265 aa).

Over 1-43 (MSEEVTYADLQFQNSSEMEKIPEIGKFGEKAPPAPSHVWRPAA) the chain is Cytoplasmic. The ITIM motif motif lies at 5-10 (VTYADL). At tyrosine 7 the chain carries Phosphotyrosine. A helical; Signal-anchor for type II membrane protein transmembrane segment spans residues 44–64 (LFLTLLCLLLLIGLGVLASMF). Topologically, residues 65–265 (HVTLKIEMKK…QLGSTYFREA (201 aa)) are extracellular. N-linked (GlcNAc...) asparagine glycans are attached at residues asparagine 88 and asparagine 98. Disulfide bonds link cysteine 118–cysteine 130, cysteine 133–cysteine 144, cysteine 161–cysteine 248, and cysteine 227–cysteine 240. A C-type lectin domain is found at 140-249 (HKDSCYFLSD…CTYKKRMICE (110 aa)). The N-linked (GlcNAc...) asparagine glycan is linked to asparagine 165.

Homodimer; disulfide-linked. Interacts (when the ITIM motif is phosphorylated) with PTPN6 and PTPN11. In terms of processing, phosphorylated at Tyr-7 by SRC in the ITIM motif following ligand-binding, promoting recruitment of tyrosine-protein phosphatases PTPN6 and PTPN11. Highly N-glycosylated; glycosylation varies between cell types. As to expression, preferentially expressed in lymphoid tissues and immune cells, including natural killer (NK) cells, T-cells, dendritic cells and monocytes or macrophages. Detected in spleen macrophage-rich red pulp and in lymph node (at protein level). Detected in peripheral blood leukocytes, dendritic cells, bone marrow, monocytes, mononuclear leukocytes and macrophages.

The protein resides in the cell membrane. Functionally, myeloid inhibitory C-type lectin receptor that acts as a negative regulator of myeloid cell activation. Myeloid cell inhibition is required to limit proinflammatory pathways and protect against excessive inflammation. Specifically recognizes and binds various structures, such as neutrophil extracellular traps (NETs) or monosodium urate crystals. Also acts as a pattern-recognition receptor for pathogen-associated molecules, such as plasmodium hemozoin or mycobacterial micolic acid. Ligand-binding induces phosphorylation of its ITIM motif, followed by recruitment of tyrosine-protein phosphatases PTPN6 and PTPN11, which counteract tyrosine-protein kinase SYK, thereby preventing myeloid cell activation. Acts as a pattern-recognition receptor for NETs in neutrophils: specifically recognizes DNA in NETs, leading to inhibit neutrophil activation and limit further NET formation. This regulation is essential for controlling key neutrophil responses and limit NET-mediated inflammatory conditions. Also recognizes dead cells by acting as a receptor for monosodium urate crystals, leading to down-regulate neutrophil activation. Binding to monosodium urate crystals also promotes the type I interferon response. Acts as an inhibitor of natural killer (NK) cell cytotoxicity. Also acts as an ihibitor of dendritic cell maturation in an IL10-dependent manner. The sequence is that of C-type lectin domain family 12 member A from Homo sapiens (Human).